The primary structure comprises 166 residues: Plastocyanin, chloroplastic (166 aa).

The N-terminal 67 residues, 1–67 (MASLTSAAVT…GAVLASNALA (67 aa)), are a transit peptide targeting the chloroplast. One can recognise a Plastocyanin-like domain in the interval 68-166 (VEVLLGGSDG…AGMAGKITVN (99 aa)). Cu cation-binding residues include His-104, Cys-151, His-154, and Met-159.

This sequence belongs to the plastocyanin family. The cofactor is Cu(2+).

Its subcellular location is the plastid. The protein resides in the chloroplast thylakoid membrane. In terms of biological role, participates in electron transfer between P700 and the cytochrome b6-f complex in photosystem I. The polypeptide is Plastocyanin, chloroplastic (PETE) (Fritillaria agrestis (Stinkbells)).